Here is a 2380-residue protein sequence, read N- to C-terminus: Probable polyketide synthase 25 (2380 aa).

Residues 1–18 (MDNSYLNNPQFDINNGNK) show a composition bias toward polar residues. The disordered stretch occupies residues 1 to 29 (MDNSYLNNPQFDINNGNKEVTDDDNNKNN). The 427-residue stretch at 31–457 (DNLVAIVGVG…GSNCCLVLSQ (427 aa)) folds into the Ketosynthase family 3 (KS3) domain. Catalysis depends on for beta-ketoacyl synthase activity residues C198, H340, and H380. The acyl/malonyl transferase stretch occupies residues 649–682 (GIKASFMLGHSLGEVTTAYCSGMIDIDQLCYLIY). S659 acts as the For acyl/malonyl transferase activity in catalysis. Positions 948-1070 (ISILGNSMQD…ANFQLYNNGK (123 aa)) are N-terminal hotdog fold. The region spanning 948–1234 (ISILGNSMQD…CTSLTPVKDP (287 aa)) is the PKS/mFAS DH domain. Catalysis depends on H982, which acts as the Proton acceptor; for dehydratase activity. A C-terminal hotdog fold region spans residues 1085 to 1234 (NLSSIPWDKF…CTSLTPVKDP (150 aa)). D1148 (proton donor; for dehydratase activity) is an active-site residue. Residues 2299-2376 (KNSTNIKDKF…MVCQIINDNF (78 aa)) form the Carrier domain. S2336 is modified (O-(pantetheine 4'-phosphoryl)serine).

It depends on pantetheine 4'-phosphate as a cofactor.

Probable polyketide synthase. The polypeptide is Probable polyketide synthase 25 (pks25) (Dictyostelium discoideum (Social amoeba)).